Consider the following 192-residue polypeptide: MAAMSEDSCVNFKEMMFIDNTLYFIPEENGDLESDNFGRLHCTTAVIRNINDQVLFVDKRQPVFEDMTDIDQSASEPQTRLIIYMYKDSEVRGLAVTLSVKDSKMSTLSCKNKIISFEEMDPPENIDDIQSDLIFFQKRVPGHNKMEFESSLYEGHFLACQKEDDAFKLILKKKDENGDKSVMFTLTNLHQS.

Residues 1-35 (MAAMSEDSCVNFKEMMFIDNTLYFIPEENGDLESD) constitute a propeptide that is removed on maturation.

It belongs to the IL-1 family. In terms of assembly, forms a ternary complex with ligand-binding receptor subunit IL18R1 and signaling receptor subunit IL18RAP at the plasma membrane. Mature IL18 first binds to IL18R1 forming a low affinity binary complex, which then interacts with IL18RAP to form a high affinity ternary complex that signals inside the cell. Interacts with cargo receptor TMED10; the interaction mediates the translocation from the cytoplasm into the ERGIC (endoplasmic reticulum-Golgi intermediate compartment) and thereby secretion. The pro-IL-18 precursor is processed by CASP1 to yield its mature, active form. The pro-IL-18 precursor is however not processed by Casp4/Casp11 in rodents. The pro-IL-18 precursor features autoinhibitory interactions between the propeptide and the post-cleavage-site region, preventing recognition by the IL18R1 receptor. Processing by CASP1 induces conformational changes to generate critical receptor-binding sites. The mature form is then secreted and released in the extracellular milieu by passing through the gasdermin-D (GSDMD) pore. In contrast, cleavage by CASP3 inactivates IL18.

It localises to the cytoplasm. It is found in the secreted. Functionally, pro-inflammatory cytokine primarily involved in epithelial barrier repair, polarized T-helper 1 (Th1) cell and natural killer (NK) cell immune responses. Upon binding to IL18R1 and IL18RAP, forms a signaling ternary complex which activates NF-kappa-B, triggering synthesis of inflammatory mediators. Synergizes with IL12/interleukin-12 to induce IFNG synthesis from T-helper 1 (Th1) cells and natural killer (NK) cells. Involved in transduction of inflammation downstream of pyroptosis: its mature form is specifically released in the extracellular milieu by passing through the gasdermin-D (GSDMD) pore. The protein is Interleukin-18 of Mus musculus (Mouse).